The sequence spans 213 residues: NADH dehydrogenase [ubiquinone] iron-sulfur protein 7, mitochondrial (213 aa).

The transit peptide at 1-37 (MAVLSAPGLRGFRILGLRSSVGPAVQARSVHQSVATD) directs the protein to the mitochondrion. Over residues 30–44 (VHQSVATDGPSSTQP) the composition is skewed to polar residues. The interval 30 to 53 (VHQSVATDGPSSTQPALPKARAVA) is disordered. Residues Cys88 and Cys89 each coordinate [4Fe-4S] cluster. Position 111 is a hydroxyarginine (Arg111). [4Fe-4S] cluster is bound by residues Cys153 and Cys183.

This sequence belongs to the complex I 20 kDa subunit family. In terms of assembly, core subunit of respiratory chain NADH dehydrogenase (Complex I) which is composed of 45 different subunits. This is a component of the iron-sulfur (IP) fragment of the enzyme. The cofactor is [4Fe-4S] cluster. Hydroxylated ar Arg-111 by NDUFAF5 early in the pathway of assembly of complex I, before the formation of the juncture between peripheral and membrane arms.

It is found in the mitochondrion inner membrane. The catalysed reaction is a ubiquinone + NADH + 5 H(+)(in) = a ubiquinol + NAD(+) + 4 H(+)(out). Functionally, core subunit of the mitochondrial membrane respiratory chain NADH dehydrogenase (Complex I) which catalyzes electron transfer from NADH through the respiratory chain, using ubiquinone as an electron acceptor. Essential for the catalytic activity of complex I. This Pan troglodytes (Chimpanzee) protein is NADH dehydrogenase [ubiquinone] iron-sulfur protein 7, mitochondrial (NDUFS7).